The following is a 122-amino-acid chain: Proteasome assembly chaperone 3 (122 aa).

The residue at position 1 (Met1) is an N-acetylmethionine.

The protein belongs to the PSMG3 family. In terms of assembly, homodimer. Interacts directly with alpha and beta subunits of the 20S proteasome but dissociates before the formation of half-proteasomes, probably upon recruitment of POMP. Interacts with PSMG4.

Functionally, chaperone protein which promotes assembly of the 20S proteasome. May cooperate with PSMG1-PSMG2 heterodimers to orchestrate the correct assembly of proteasomes. The protein is Proteasome assembly chaperone 3 (Psmg3) of Mus musculus (Mouse).